The chain runs to 89 residues: Prostaglandin E2 receptor EP3 subtype (89 aa).

The chain crosses the membrane as a helical span at residues 1–18 (GVWLAVLAFALLPVLGVG). Residues 19–48 (QYTIQWPGTWCFISTGPGGNGTNSRQNWGN) lie on the Extracellular side of the membrane. Asn38 carries an N-linked (GlcNAc...) asparagine glycan. Residues 49 to 74 (VFFASDFAILGLSALVVTFACNLATI) form a helical membrane-spanning segment. At 75-89 (KALVSRCRAKATASQ) the chain is on the cytoplasmic side.

The protein belongs to the G-protein coupled receptor 1 family. Interacts (via C-terminus) with MKLN1.

The protein localises to the cell membrane. In terms of biological role, receptor for prostaglandin E2 (PGE2). Required for normal development of fever in response to pyrinogens, including IL1B, prostaglandin E2 and bacterial lipopolysaccharide (LPS). Required for normal potentiation of platelet aggregation by prostaglandin E2, and thus plays a role in the regulation of blood coagulation. Required for increased HCO3(-) secretion in the duodenum in response to mucosal acidification, and thereby contributes to the protection of the mucosa against acid-induced ulceration. Not required for normal kidney function, normal urine volume and osmolality. The chain is Prostaglandin E2 receptor EP3 subtype (PTGER3) from Ovis aries (Sheep).